Here is a 352-residue protein sequence, read N- to C-terminus: uncharacterized protein (352 aa).

To Synechocystis PCC 6803 slr0039.

This is an uncharacterized protein from Archaeoglobus fulgidus (strain ATCC 49558 / DSM 4304 / JCM 9628 / NBRC 100126 / VC-16).